The primary structure comprises 143 residues: Large ribosomal subunit protein uL15 (143 aa).

A disordered region spans residues 1 to 52; the sequence is MELNTIQPADGAKHYKRRVGRGIGSGLGKTAGRGHKGQKSRSGGFHKVGFEG. The segment covering 21-31 has biased composition (gly residues); that stretch reads RGIGSGLGKTA.

Belongs to the universal ribosomal protein uL15 family. Part of the 50S ribosomal subunit.

Functionally, binds to the 23S rRNA. This Herminiimonas arsenicoxydans protein is Large ribosomal subunit protein uL15.